A 134-amino-acid chain; its full sequence is Lymphocyte antigen 6G (134 aa).

The signal sequence occupies residues 1–26; the sequence is MDTCHIAKSCVLILLVVLLCAERAQG. Positions 27-118 constitute a UPAR/Ly6 domain; the sequence is LECYNCIGVP…PTGGSSWTMA (92 aa). Cystine bridges form between Cys-29-Cys-53, Cys-32-Cys-41, Cys-46-Cys-74, Cys-78-Cys-98, and Cys-99-Cys-104. Residue Asn-105 is the site of GPI-anchor amidated asparagine attachment. The propeptide at 106 to 134 is removed in mature form; it reads AAVPTGGSSWTMAGVLLFSLVSVLLQTFL.

Expressed in bone marrow.

The protein localises to the cell membrane. This Mus musculus (Mouse) protein is Lymphocyte antigen 6G (Ly6g).